A 31-amino-acid chain; its full sequence is Histone H1.3 (31 aa).

Belongs to the histone H1/H5 family.

The protein localises to the nucleus. It is found in the chromosome. Its function is as follows. Histones H1 are necessary for the condensation of nucleosome chains into higher-order structures. This is Histone H1.3 from Triticum aestivum (Wheat).